The sequence spans 635 residues: Chaperone protein DnaK (635 aa).

Residue Thr-198 is modified to Phosphothreonine; by autocatalysis. The interval 597–635 (LYEQDQANNERHDTPETEKAEGDNVVDAEFQEIDDQDKK) is disordered. Residues 604–618 (NNERHDTPETEKAEG) are compositionally biased toward basic and acidic residues. Positions 620 to 635 (NVVDAEFQEIDDQDKK) are enriched in acidic residues.

It belongs to the heat shock protein 70 family.

Its function is as follows. Acts as a chaperone. The sequence is that of Chaperone protein DnaK from Zymomonas mobilis subsp. mobilis (strain ATCC 31821 / ZM4 / CP4).